Reading from the N-terminus, the 262-residue chain is Phosphatidylglycerol--prolipoprotein diacylglyceryl transferase (262 aa).

A run of 4 helical transmembrane segments spans residues 9–29, 41–61, 80–100, and 109–129; these read LGPL…ILAV, IIPD…ILGA, IFAI…GALV, and LINT…AQSL. Arginine 131 is an a 1,2-diacyl-sn-glycero-3-phospho-(1'-sn-glycerol) binding site. 3 helical membrane passes run 167 to 187, 197 to 217, and 226 to 246; these read QPTF…ILIF, GHIT…IEGM, and GFRV…MIVI.

Belongs to the Lgt family.

It localises to the cell membrane. The enzyme catalyses L-cysteinyl-[prolipoprotein] + a 1,2-diacyl-sn-glycero-3-phospho-(1'-sn-glycerol) = an S-1,2-diacyl-sn-glyceryl-L-cysteinyl-[prolipoprotein] + sn-glycerol 1-phosphate + H(+). The protein operates within protein modification; lipoprotein biosynthesis (diacylglyceryl transfer). In terms of biological role, catalyzes the transfer of the diacylglyceryl group from phosphatidylglycerol to the sulfhydryl group of the N-terminal cysteine of a prolipoprotein, the first step in the formation of mature lipoproteins. In Streptococcus pneumoniae serotype 4 (strain ATCC BAA-334 / TIGR4), this protein is Phosphatidylglycerol--prolipoprotein diacylglyceryl transferase.